The following is a 504-amino-acid chain: Anaerobic nitric oxide reductase transcription regulator NorR (504 aa).

Position 57 is a 4-aspartylphosphate (Asp-57). The Sigma-54 factor interaction domain maps to 187 to 416; sequence MIGLSPGMTQ…LEHAIHRAVV (230 aa). Residues 215 to 222 and 278 to 287 each bind ATP; these read GETGTGKE and ADNGTLFLDE. A DNA-binding region (H-T-H motif) is located at residues 479-498; that stretch reads WAACARMLETDVANLHRLAK.

Its pathway is nitrogen metabolism; nitric oxide reduction. In terms of biological role, required for the expression of anaerobic nitric oxide (NO) reductase, acts as a transcriptional activator for at least the norVW operon. Activation also requires sigma-54. The sequence is that of Anaerobic nitric oxide reductase transcription regulator NorR from Escherichia coli O17:K52:H18 (strain UMN026 / ExPEC).